An 830-amino-acid chain; its full sequence is Penicillin-binding protein 1A (830 aa).

The Cytoplasmic portion of the chain corresponds to 1–18 (MGKKKKKRKSSAFKIILN). Residues 19-39 (VFLSIFLVAGVAFGGIVFAMI) traverse the membrane as a helical; Signal-anchor for type II membrane protein segment. The Extracellular segment spans residues 40–830 (KTAPPLNVQQ…QNHEDNKNKQ (791 aa)). The tract at residues 57–229 (SILYDDKGQY…PSVYYPYSSA (173 aa)) is transglycosylase. Catalysis depends on Glu96, which acts as the Proton donor; for transglycosylase activity. The segment at 357–641 (ASAVIMDYHN…AARLWGDIMK (285 aa)) is transpeptidase. The active-site Acyl-ester intermediate; for transpeptidase activity is the Ser398. A disordered region spans residues 754–830 (GGSLPPTEEK…QNHEDNKNKQ (77 aa)). Residues 760–786 (TEEKNNSNTRDKNKDKNKNKNKDKNPS) are compositionally biased toward basic and acidic residues. Over residues 787–820 (QDKPNNNNNDNNSNNNNNNNDNNNNTKPPENDSN) the composition is skewed to low complexity. The segment covering 821–830 (QNHEDNKNKQ) has biased composition (basic and acidic residues).

It in the N-terminal section; belongs to the glycosyltransferase 51 family. In the C-terminal section; belongs to the transpeptidase family.

The protein localises to the cell membrane. It carries out the reaction [GlcNAc-(1-&gt;4)-Mur2Ac(oyl-L-Ala-gamma-D-Glu-L-Lys-D-Ala-D-Ala)](n)-di-trans,octa-cis-undecaprenyl diphosphate + beta-D-GlcNAc-(1-&gt;4)-Mur2Ac(oyl-L-Ala-gamma-D-Glu-L-Lys-D-Ala-D-Ala)-di-trans,octa-cis-undecaprenyl diphosphate = [GlcNAc-(1-&gt;4)-Mur2Ac(oyl-L-Ala-gamma-D-Glu-L-Lys-D-Ala-D-Ala)](n+1)-di-trans,octa-cis-undecaprenyl diphosphate + di-trans,octa-cis-undecaprenyl diphosphate + H(+). The enzyme catalyses Preferential cleavage: (Ac)2-L-Lys-D-Ala-|-D-Ala. Also transpeptidation of peptidyl-alanyl moieties that are N-acyl substituents of D-alanine.. It participates in cell wall biogenesis; peptidoglycan biosynthesis. Its function is as follows. Cell wall formation. Synthesis of cross-linked peptidoglycan from the lipid intermediates. The enzyme has a penicillin-insensitive transglycosylase N-terminal domain (formation of linear glycan strands) and a penicillin-sensitive transpeptidase C-terminal domain (cross-linking of the peptide subunits). In Clostridium botulinum (strain Hall / ATCC 3502 / NCTC 13319 / Type A), this protein is Penicillin-binding protein 1A (pbpA).